Consider the following 509-residue polypeptide: tRNA-2-methylthio-N(6)-dimethylallyladenosine synthase (509 aa).

Positions 1 to 15 (MNEQQRLASQQANAS) are enriched in polar residues. Residues 1–22 (MNEQQRLASQQANASTKKEEKD) are disordered. Positions 66 to 184 (RKFYIRTYGC…LPYILKDAMF (119 aa)) constitute an MTTase N-terminal domain. [4Fe-4S] cluster-binding residues include Cys-75, Cys-111, Cys-145, Cys-221, Cys-225, and Cys-228. A Radical SAM core domain is found at 207 to 437 (RRGDIKAWVN…NELVNEFSAK (231 aa)). A TRAM domain is found at 440 to 503 (KKYEGQIVEV…TWSLNGELVE (64 aa)).

Belongs to the methylthiotransferase family. MiaB subfamily. As to quaternary structure, monomer. The cofactor is [4Fe-4S] cluster.

Its subcellular location is the cytoplasm. The catalysed reaction is N(6)-dimethylallyladenosine(37) in tRNA + (sulfur carrier)-SH + AH2 + 2 S-adenosyl-L-methionine = 2-methylsulfanyl-N(6)-dimethylallyladenosine(37) in tRNA + (sulfur carrier)-H + 5'-deoxyadenosine + L-methionine + A + S-adenosyl-L-homocysteine + 2 H(+). Catalyzes the methylthiolation of N6-(dimethylallyl)adenosine (i(6)A), leading to the formation of 2-methylthio-N6-(dimethylallyl)adenosine (ms(2)i(6)A) at position 37 in tRNAs that read codons beginning with uridine. The protein is tRNA-2-methylthio-N(6)-dimethylallyladenosine synthase of Bacillus cytotoxicus (strain DSM 22905 / CIP 110041 / 391-98 / NVH 391-98).